The primary structure comprises 222 residues: 2-C-methyl-D-erythritol 4-phosphate cytidylyltransferase (222 aa).

The protein belongs to the IspD/TarI cytidylyltransferase family. IspD subfamily.

The enzyme catalyses 2-C-methyl-D-erythritol 4-phosphate + CTP + H(+) = 4-CDP-2-C-methyl-D-erythritol + diphosphate. Its pathway is isoprenoid biosynthesis; isopentenyl diphosphate biosynthesis via DXP pathway; isopentenyl diphosphate from 1-deoxy-D-xylulose 5-phosphate: step 2/6. Its function is as follows. Catalyzes the formation of 4-diphosphocytidyl-2-C-methyl-D-erythritol from CTP and 2-C-methyl-D-erythritol 4-phosphate (MEP). This Thermotoga maritima (strain ATCC 43589 / DSM 3109 / JCM 10099 / NBRC 100826 / MSB8) protein is 2-C-methyl-D-erythritol 4-phosphate cytidylyltransferase.